The primary structure comprises 1250 residues: DNA-directed RNA polymerase subunit beta (1250 aa).

A disordered region spans residues 1139-1226 (GGAELAKPAP…DLFDEGDEDL (88 aa)). 2 stretches are compositionally biased toward acidic residues: residues 1155 to 1183 (ESGE…DPEE) and 1207 to 1226 (ADDD…DEDL).

Belongs to the RNA polymerase beta chain family. The RNAP catalytic core consists of 2 alpha, 1 beta, 1 beta' and 1 omega subunit. When a sigma factor is associated with the core the holoenzyme is formed, which can initiate transcription.

The catalysed reaction is RNA(n) + a ribonucleoside 5'-triphosphate = RNA(n+1) + diphosphate. Functionally, DNA-dependent RNA polymerase catalyzes the transcription of DNA into RNA using the four ribonucleoside triphosphates as substrates. The polypeptide is DNA-directed RNA polymerase subunit beta (Symbiobacterium thermophilum (strain DSM 24528 / JCM 14929 / IAM 14863 / T)).